Reading from the N-terminus, the 782-residue chain is Chondroitin proteoglycan 4 (782 aa).

Positions 1-18 (MRLVYSLIFLLFIPFSHP) are cleaved as a signal peptide. N-linked (GlcNAc...) asparagine glycans are attached at residues Asn76, Asn208, Asn462, Asn468, Asn474, and Asn503. The tract at residues 513-726 (ISEKSTEESS…EDQGSGNYKK (214 aa)) is disordered. Low complexity-rich tracts occupy residues 520 to 532 (ESSG…SGDG), 548 to 566 (SGSS…SSGE), 573 to 612 (SSGS…SSDT), 662 to 672 (FGESSGSSGES), and 688 to 722 (SGSS…QGSG). Residue Asn559 is glycosylated (N-linked (GlcNAc...) asparagine). O-linked (Xyl...) (chondroitin sulfate) serine glycosylation occurs at Ser691. An N-linked (GlcNAc...) asparagine glycan is attached at Asn699. O-linked (Xyl...) (chondroitin sulfate) serine glycans are attached at residues Ser701, Ser704, Ser708, Ser714, and Ser721. A glycan (N-linked (GlcNAc...) asparagine) is linked at Asn743.

The sequence is that of Chondroitin proteoglycan 4 from Caenorhabditis elegans.